The chain runs to 228 residues: THAP domain-containing protein 2 (228 aa).

The segment at 1–80 adopts a THAP-type zinc-finger fold; it reads MPTNCAAAGC…LKMDAVPTIF (80 aa). Residues 123-126 carry the HCFC1-binding motif (HBM) motif; that stretch reads EHSY.

This Homo sapiens (Human) protein is THAP domain-containing protein 2 (THAP2).